The chain runs to 156 residues: UPF0262 protein Jann_2882 (156 aa).

Belongs to the UPF0262 family.

The polypeptide is UPF0262 protein Jann_2882 (Jannaschia sp. (strain CCS1)).